Reading from the N-terminus, the 144-residue chain is Hemoglobin subunit alpha-1 (144 aa).

At serine 1 the chain carries N-acetylserine. A Globin domain is found at 1–144 (SLTAKDKSVV…VSAALADKYR (144 aa)). Histidine 61 serves as a coordination point for O2. Histidine 90 lines the heme b pocket.

Belongs to the globin family. In terms of assembly, heterotetramer of two alpha chains and two beta chains. In terms of tissue distribution, red blood cells.

Involved in oxygen transport from gills to the various peripheral tissues. In Oncorhynchus mykiss (Rainbow trout), this protein is Hemoglobin subunit alpha-1 (hba1).